The sequence spans 238 residues: Uridylate kinase (238 aa).

12–15 (KLSG) provides a ligand contact to ATP. G54 contributes to the UMP binding site. ATP-binding residues include G55 and R59. UMP contacts are provided by residues D74 and 135–142 (TGNPFFTT). ATP contacts are provided by T162, Y168, and D171.

This sequence belongs to the UMP kinase family. Homohexamer.

It localises to the cytoplasm. The enzyme catalyses UMP + ATP = UDP + ADP. It functions in the pathway pyrimidine metabolism; CTP biosynthesis via de novo pathway; UDP from UMP (UMPK route): step 1/1. Inhibited by UTP. Catalyzes the reversible phosphorylation of UMP to UDP. In Bordetella parapertussis (strain 12822 / ATCC BAA-587 / NCTC 13253), this protein is Uridylate kinase.